A 623-amino-acid chain; its full sequence is Laccase-1 (623 aa).

The signal sequence occupies residues 1-22 (MKTFTSALALVVGMLAPGAVVA). Positions 23 to 50 (APPSTPAQRDLVELREARQEGGKDLRPR) are excised as a propeptide. Cys54 and Cys62 are disulfide-bonded. N-linked (GlcNAc...) asparagine glycans are attached at residues Asn89 and Asn138. Cu cation is bound by residues His143, His145, His188, and His190. 2 disulfides stabilise this stretch: Cys164-Cys590 and Cys348-Cys382. N-linked (GlcNAc...) asparagine glycans are attached at residues Asn251, Asn266, Asn294, and Asn339. Residues Asn426 and Asn446 are each glycosylated (N-linked (GlcNAc...) asparagine). The Cu cation site is built by His481, His484, His486, His552, Cys553, His554, and His558. A propeptide spanning residues 610–623 (KRRRWVEESEWLVR) is cleaved from the precursor.

Belongs to the multicopper oxidase family. As to quaternary structure, monomer. Requires Cu cation as cofactor. Secreted protein; extracellular space.

The enzyme catalyses 4 hydroquinone + O2 = 4 benzosemiquinone + 2 H2O. In terms of biological role, lignin degradation and detoxification of lignin-derived products. This Melanocarpus albomyces protein is Laccase-1 (LAC1).